A 435-amino-acid chain; its full sequence is FAD-dependent monooxygenase ATEG_07662 (435 aa).

Residues proline 8–leucine 28 form a helical membrane-spanning segment. The FAD site is built by glutamate 38, alanine 51, and arginine 119. N-linked (GlcNAc...) asparagine glycosylation is present at asparagine 191. Arginine 201 is a catalytic residue. Residues aspartate 317 and alanine 330 each coordinate FAD.

This sequence belongs to the paxM FAD-dependent monooxygenase family. FAD serves as cofactor.

It localises to the membrane. Its pathway is secondary metabolite biosynthesis. Functionally, FAD-dependent monooxygenase; part of the cluster B that mediates the biosynthesis of azasperpyranones, members of the azaphilone family that exhibit anti-cancer activities. Azasperpyranones are synthesized by 2 clusters, A and B. Cluster A is responsible for the production of the polyhydric phenol moiety while the azaphilonoid scaffold is produced by the cluster B. The non-reducing polyketide synthase ATEG_03629 produces 5-methyl orsellinic acid, which is then reduced to 5-methyl orsellinic aldehyde by the NRPS-like protein ATEG_03630. 5-methyl orsellinic aldehyde is then first hydroxylated by the FAD-dependent monooxygenase ATEG_03635 and subsequently hydroxylated by the cytochrome P450 monooxygenase ATEG_03631 to produce the unstable polyhydric phenol precursor of azasperpyranones. On the other hand, the polyketide synthase ATEG_07659 is responsible for producing the 3,5-dimethyloctadienone moiety from acetyl-CoA, three malonyl-CoA, and two S-adenosyl methionines (SAM). The 3,5-dimethyloctadienone moiety is then loaded onto the SAT domain of ATEG_07661 and extended with four malonyl-CoA and one SAM, which leads to the formation of 2,4-dihydroxy-6-(5,7-dimethyl-2-oxo-trans-3-trans-5-nonadienyl)-3-methylbenzaldehyde (compound 8) after reductive release and aldol condensation. The FAD-dependent monooxygenase ATEG_07662 is the next enzyme in the biosynthesis sequence and hydroxylates the side chain at the benzylic position of compound 8. In Aspergillus nidulans, afoF, the ortholog of the FAD-dependent oxygenase ATEG_07660, is the key enzyme for the biosynthesis of asperfuranone by catalyzing the hydroxylation at C-8 of to prevent the formation of a six-membered ring hemiacetal intermediate and thus facilitating the formation of a five-membered ring to produce asperfuranone. In Aspergillus terreus, ATEG_07660 is probably not functional, which leads to the formation of the six-membered ring hemiacetal intermediate presperpyranone instead of asperfuranone. Finally, ATEG_03636 is involved in the condensation of the polyhydric phenol moiety produced by cluster A and the perasperpyranone precursor produced by cluster B, to yield azasperpyranone A. Further modifications of azasperpyranone A result in the production of derivatives, including azasperpyranone B to F. This chain is FAD-dependent monooxygenase ATEG_07662, found in Aspergillus terreus (strain NIH 2624 / FGSC A1156).